The primary structure comprises 336 residues: C4-dicarboxylate-binding periplasmic protein DctP (336 aa).

The signal sequence occupies residues 1 to 31 (MTRLNTCTFIKQIVKMTSIAALLGASLNSWA). Residues lysine 48, lysine 101, arginine 176, asparagine 216, asparagine 220, and tyrosine 243 each contribute to the (S)-malate site. Succinate is bound by residues lysine 48, lysine 101, arginine 176, asparagine 216, asparagine 220, and tyrosine 243.

Belongs to the bacterial solute-binding protein 7 family. As to quaternary structure, the complex comprises the extracytoplasmic solute receptor protein DctP, and the two transmembrane proteins DctQ and DctM.

The protein localises to the periplasm. Its function is as follows. Part of the tripartite ATP-independent periplasmic (TRAP) transport system DctPQM involved in C4-dicarboxylates uptake. Required for the utilization of succinate, fumarate, L-malate and alpha-ketoglutarate. Binds succinate and malate. This Shewanella loihica (strain ATCC BAA-1088 / PV-4) protein is C4-dicarboxylate-binding periplasmic protein DctP.